The sequence spans 522 residues: Coiled-coil domain-containing protein 149-B (522 aa).

2 coiled-coil regions span residues 1-196 (MANQ…LESK) and 260-287 (IRHQ…LEVS). The tract at residues 413–522 (ACTAERSEQH…TSPHQECPSS (110 aa)) is disordered. 3 stretches are compositionally biased toward polar residues: residues 429 to 438 (GGHQSMSTEA), 467 to 490 (QPVT…TAEQ), and 503 to 522 (ASLN…CPSS).

This sequence belongs to the CCDC149 family.

The polypeptide is Coiled-coil domain-containing protein 149-B (ccdc149b) (Danio rerio (Zebrafish)).